The following is a 104-amino-acid chain: Translation initiation factor 1A (104 aa).

A compositionally biased stretch (low complexity) spans 1–14 (MRGQQAPPQQPTRV). A disordered region spans residues 1–20 (MRGQQAPPQQPTRVRTPREN). The 76-residue stretch at 12-87 (TRVRTPRENE…EKCDVIWRYT (76 aa)) folds into the S1-like domain.

Belongs to the eIF-1A family.

Functionally, seems to be required for maximal rate of protein biosynthesis. Enhances ribosome dissociation into subunits and stabilizes the binding of the initiator Met-tRNA(I) to 40 S ribosomal subunits. The sequence is that of Translation initiation factor 1A (eIF1A) from Methanococcus maripaludis (strain C6 / ATCC BAA-1332).